The chain runs to 955 residues: Coiled-coil domain-containing protein 146 (955 aa).

A compositionally biased stretch (acidic residues) spans M1–D17. Residues M1–E22 are disordered. Coiled-coil stretches lie at residues E114–E141, G169–N321, S400–M461, K534–S640, and N667–A832.

In terms of assembly, interacts with CCDC38 and CCDC42. Interacts with intraflagellar transport proteins IFT20 and IFT88. As to quaternary structure, (Microbial infection) Interacts with Chlamydia trachomatis incM/YT288. In host cells infected with C.trachomatis incM, CCDC146 is recruited to the periphery of the pathogen-containing vacuole but recruitment is not dependent on incM. In terms of tissue distribution, widely expressed.

It is found in the cytoplasm. Its subcellular location is the cytoskeleton. The protein resides in the microtubule organizing center. It localises to the centrosome. The protein localises to the centriole. It is found in the flagellum axoneme. Its subcellular location is the cilium basal body. The protein resides in the midbody. Essential for sperm flagellum biogenesis and male fertility. The chain is Coiled-coil domain-containing protein 146 (CCDC146) from Homo sapiens (Human).